The primary structure comprises 336 residues: Anthranilate phosphoribosyltransferase (336 aa).

Residues Gly80, 83-84 (GD), Thr88, 90-93 (NIST), 108-116 (KHGNRSITS), and Ser120 contribute to the 5-phospho-alpha-D-ribose 1-diphosphate site. Anthranilate is bound at residue Gly80. Ser92 provides a ligand contact to Mg(2+). Asn111 is an anthranilate binding site. Arg166 serves as a coordination point for anthranilate. Residues Asp224 and Glu225 each coordinate Mg(2+).

The protein belongs to the anthranilate phosphoribosyltransferase family. Homodimer. It depends on Mg(2+) as a cofactor.

The catalysed reaction is N-(5-phospho-beta-D-ribosyl)anthranilate + diphosphate = 5-phospho-alpha-D-ribose 1-diphosphate + anthranilate. The protein operates within amino-acid biosynthesis; L-tryptophan biosynthesis; L-tryptophan from chorismate: step 2/5. Its function is as follows. Catalyzes the transfer of the phosphoribosyl group of 5-phosphorylribose-1-pyrophosphate (PRPP) to anthranilate to yield N-(5'-phosphoribosyl)-anthranilate (PRA). The chain is Anthranilate phosphoribosyltransferase from Caldicellulosiruptor saccharolyticus (strain ATCC 43494 / DSM 8903 / Tp8T 6331).